Reading from the N-terminus, the 663-residue chain is Translation factor GUF1 homolog, mitochondrial (663 aa).

A tr-type G domain is found at 64 to 250 (EKIRNFSIIA…AVIERIPPPP (187 aa)). GTP is bound by residues 73 to 80 (AHIDHGKS), 143 to 147 (DTPGH), and 197 to 200 (NKID).

The protein belongs to the TRAFAC class translation factor GTPase superfamily. Classic translation factor GTPase family. LepA subfamily.

It is found in the mitochondrion inner membrane. The enzyme catalyses GTP + H2O = GDP + phosphate + H(+). Promotes mitochondrial protein synthesis. May act as a fidelity factor of the translation reaction, by catalyzing a one-codon backward translocation of tRNAs on improperly translocated ribosomes. Binds to mitochondrial ribosomes in a GTP-dependent manner. In Arabidopsis thaliana (Mouse-ear cress), this protein is Translation factor GUF1 homolog, mitochondrial.